We begin with the raw amino-acid sequence, 462 residues long: UDP-N-acetylmuramate--L-alanine ligase (462 aa).

Glycine 117–threonine 123 is an ATP binding site.

The protein belongs to the MurCDEF family.

It is found in the cytoplasm. The catalysed reaction is UDP-N-acetyl-alpha-D-muramate + L-alanine + ATP = UDP-N-acetyl-alpha-D-muramoyl-L-alanine + ADP + phosphate + H(+). It functions in the pathway cell wall biogenesis; peptidoglycan biosynthesis. Cell wall formation. The polypeptide is UDP-N-acetylmuramate--L-alanine ligase (Streptomyces coelicolor (strain ATCC BAA-471 / A3(2) / M145)).